Here is a 277-residue protein sequence, read N- to C-terminus: Large ribosomal subunit protein uL2 (277 aa).

Disordered regions lie at residues 34 to 55 (LQPL…RHHG) and 213 to 277 (WKGI…RKKK).

The protein belongs to the universal ribosomal protein uL2 family. Part of the 50S ribosomal subunit. Forms a bridge to the 30S subunit in the 70S ribosome.

Functionally, one of the primary rRNA binding proteins. Required for association of the 30S and 50S subunits to form the 70S ribosome, for tRNA binding and peptide bond formation. It has been suggested to have peptidyltransferase activity; this is somewhat controversial. Makes several contacts with the 16S rRNA in the 70S ribosome. The protein is Large ribosomal subunit protein uL2 of Staphylococcus haemolyticus (strain JCSC1435).